Here is a 227-residue protein sequence, read N- to C-terminus: Germin-like protein subfamily 1 member 6 (227 aa).

Positions 1 to 25 (MMEVLLRLLVTQVILLALATSFVSC) are cleaved as a signal peptide. A disulfide bridge links Cys35 with Cys51. A Cupin type-1 domain is found at 65 to 216 (SGLNIARNTT…AFQLDVKLVR (152 aa)). Residues Asn72 and Asn80 are each glycosylated (N-linked (GlcNAc...) asparagine). 4 residues coordinate Mn(2+): His113, His115, Glu120, and His162.

This sequence belongs to the germin family. Oligomer (believed to be a pentamer but probably hexamer).

The protein resides in the secreted. Its subcellular location is the extracellular space. It localises to the apoplast. Its function is as follows. May play a role in plant defense. Probably has no oxalate oxidase activity even if the active site is conserved. This is Germin-like protein subfamily 1 member 6 from Arabidopsis thaliana (Mouse-ear cress).